The following is a 434-amino-acid chain: Enolase (434 aa).

The segment at 29 to 56 is disordered; the sequence is SGHTGRAAVPSGASTGSREALEMRDGDK. Residues 47 to 56 show a composition bias toward basic and acidic residues; it reads EALEMRDGDK. (2R)-2-phosphoglycerate is bound at residue Gln163. Glu205 serves as the catalytic Proton donor. Residues Asp242, Glu285, and Asp312 each coordinate Mg(2+). (2R)-2-phosphoglycerate is bound by residues Lys337, Arg366, Ser367, and Lys388. The active-site Proton acceptor is the Lys337.

The protein belongs to the enolase family. As to quaternary structure, homooctamer. Requires Mg(2+) as cofactor.

It localises to the cytoplasm. It is found in the secreted. The protein localises to the cell surface. The catalysed reaction is (2R)-2-phosphoglycerate = phosphoenolpyruvate + H2O. It functions in the pathway carbohydrate degradation; glycolysis; pyruvate from D-glyceraldehyde 3-phosphate: step 4/5. Functionally, catalyzes the reversible conversion of 2-phosphoglycerate (2-PG) into phosphoenolpyruvate (PEP). It is essential for the degradation of carbohydrates via glycolysis. This Nitratidesulfovibrio vulgaris (strain DSM 19637 / Miyazaki F) (Desulfovibrio vulgaris) protein is Enolase.